Consider the following 314-residue polypeptide: Malate dehydrogenase (314 aa).

NAD(+)-binding positions include Gly-11–Gly-16 and Asp-35. Arg-84 and Arg-90 together coordinate substrate. NAD(+) is bound by residues Asn-97 and Ile-120–Asn-122. Substrate is bound by residues Asn-122 and Arg-153. The active-site Proton acceptor is the His-177.

Belongs to the LDH/MDH superfamily. MDH type 3 family.

It catalyses the reaction (S)-malate + NAD(+) = oxaloacetate + NADH + H(+). In terms of biological role, catalyzes the reversible oxidation of malate to oxaloacetate. This chain is Malate dehydrogenase, found in Rickettsia africae (strain ESF-5).